Here is a 78-residue protein sequence, read N- to C-terminus: Acyl carrier protein (78 aa).

The 76-residue stretch at 2–77 (STIEERVKKI…EAIDYVTAHA (76 aa)) folds into the Carrier domain. Ser-37 is modified (O-(pantetheine 4'-phosphoryl)serine).

Belongs to the acyl carrier protein (ACP) family. In terms of processing, 4'-phosphopantetheine is transferred from CoA to a specific serine of apo-ACP by AcpS. This modification is essential for activity because fatty acids are bound in thioester linkage to the sulfhydryl of the prosthetic group.

The protein localises to the cytoplasm. It participates in lipid metabolism; fatty acid biosynthesis. Functionally, carrier of the growing fatty acid chain in fatty acid biosynthesis. The protein is Acyl carrier protein of Ectopseudomonas mendocina (strain ymp) (Pseudomonas mendocina).